We begin with the raw amino-acid sequence, 305 residues long: tRNA pseudouridine synthase B (305 aa).

Residue Asp-39 is the Nucleophile of the active site.

It belongs to the pseudouridine synthase TruB family. Type 1 subfamily.

It catalyses the reaction uridine(55) in tRNA = pseudouridine(55) in tRNA. Functionally, responsible for synthesis of pseudouridine from uracil-55 in the psi GC loop of transfer RNAs. This is tRNA pseudouridine synthase B from Staphylococcus aureus (strain Newman).